Here is a 165-residue protein sequence, read N- to C-terminus: Lipoprotein signal peptidase (165 aa).

2 helical membrane-spanning segments follow: residues 68-88 (PLLPWLSFLVCLGLIGLGLFG) and 100-120 (GFLLGGAAGNGIDRIFLGEVI). Catalysis depends on residues aspartate 121 and aspartate 137. Residues 130 to 150 (FPVFNIADISINVGLACLIFA) form a helical membrane-spanning segment.

This sequence belongs to the peptidase A8 family.

It localises to the cell inner membrane. It carries out the reaction Release of signal peptides from bacterial membrane prolipoproteins. Hydrolyzes -Xaa-Yaa-Zaa-|-(S,diacylglyceryl)Cys-, in which Xaa is hydrophobic (preferably Leu), and Yaa (Ala or Ser) and Zaa (Gly or Ala) have small, neutral side chains.. Its pathway is protein modification; lipoprotein biosynthesis (signal peptide cleavage). This protein specifically catalyzes the removal of signal peptides from prolipoproteins. This chain is Lipoprotein signal peptidase, found in Acaryochloris marina (strain MBIC 11017).